A 418-amino-acid chain; its full sequence is 3-isopropylmalate dehydratase large subunit (418 aa).

[4Fe-4S] cluster contacts are provided by C298, C358, and C361.

The protein belongs to the aconitase/IPM isomerase family. LeuC type 2 subfamily. As to quaternary structure, heterodimer of LeuC and LeuD. [4Fe-4S] cluster is required as a cofactor.

The catalysed reaction is (2R,3S)-3-isopropylmalate = (2S)-2-isopropylmalate. The protein operates within amino-acid biosynthesis; L-leucine biosynthesis; L-leucine from 3-methyl-2-oxobutanoate: step 2/4. Catalyzes the isomerization between 2-isopropylmalate and 3-isopropylmalate, via the formation of 2-isopropylmaleate. The sequence is that of 3-isopropylmalate dehydratase large subunit from Thermoanaerobacter sp. (strain X514).